The following is a 69-amino-acid chain: ATP synthase subunits region ORF 1 (69 aa).

The chain is ATP synthase subunits region ORF 1 from Fuscovulum blasticum (Rhodobacter blasticus).